The following is a 106-amino-acid chain: 10 kDa heat shock protein, mitochondrial (106 aa).

Serine 2 carries the N-acetylserine modification. Residue serine 31 is modified to Phosphoserine.

It belongs to the GroES chaperonin family. In terms of assembly, homohexamer. The N-terminus is blocked.

The protein resides in the mitochondrion matrix. In terms of biological role, eukaryotic CPN10 homolog which is essential for mitochondrial protein biogenesis, together with CPN60. Binds to CPN60 in the presence of Mg-ATP and suppresses the ATPase activity of the latter. The chain is 10 kDa heat shock protein, mitochondrial (HSP10) from Saccharomyces cerevisiae (strain ATCC 204508 / S288c) (Baker's yeast).